Reading from the N-terminus, the 148-residue chain is Proteasome chaperone 4 (148 aa).

This sequence belongs to the PSMG4 family. In terms of assembly, component of the 20S proteasome chaperone. Forms a heterodimer with IRC25 that binds to proteasome precursors. Interacts with POP2.

It localises to the cytoplasm. Functionally, involved in 20S proteasome assembly, facilitating the alpha-ring formation. Involved in maintenance of telomere length. This chain is Proteasome chaperone 4 (POC4), found in Saccharomyces cerevisiae (strain ATCC 204508 / S288c) (Baker's yeast).